A 200-amino-acid chain; its full sequence is NADH-quinone oxidoreductase subunit C (200 aa).

The protein belongs to the complex I 30 kDa subunit family. In terms of assembly, NDH-1 is composed of 14 different subunits. Subunits NuoB, C, D, E, F, and G constitute the peripheral sector of the complex.

The protein resides in the cell inner membrane. It carries out the reaction a quinone + NADH + 5 H(+)(in) = a quinol + NAD(+) + 4 H(+)(out). In terms of biological role, NDH-1 shuttles electrons from NADH, via FMN and iron-sulfur (Fe-S) centers, to quinones in the respiratory chain. The immediate electron acceptor for the enzyme in this species is believed to be ubiquinone. Couples the redox reaction to proton translocation (for every two electrons transferred, four hydrogen ions are translocated across the cytoplasmic membrane), and thus conserves the redox energy in a proton gradient. This chain is NADH-quinone oxidoreductase subunit C, found in Parvibaculum lavamentivorans (strain DS-1 / DSM 13023 / NCIMB 13966).